A 712-amino-acid polypeptide reads, in one-letter code: Saccharolysin (712 aa).

S73 is modified (phosphoserine). H501 contacts Zn(2+). Residue E502 is part of the active site. The Zn(2+) site is built by H505 and H508.

This sequence belongs to the peptidase M3 family. It depends on Zn(2+) as a cofactor.

It is found in the cytoplasm. It catalyses the reaction Cleavage of Pro-|-Phe and Ala-|-Ala bonds.. Functionally, could be involved in late stage of protein degradation. This chain is Saccharolysin (PRD1), found in Saccharomyces cerevisiae (strain ATCC 204508 / S288c) (Baker's yeast).